The chain runs to 655 residues: RNA-binding protein EWS (655 aa).

Positions 1-285 are EAD (Gln/Pro/Thr-rich); sequence MASTDYSTYS…GVYGQESGGF (285 aa). A run of 31 repeats spans residues 8–16, 17–27, 28–34, 35–42, 43–50, 51–59, 60–68, 69–75, 76–84, 85–91, 92–110, 111–116, 117–125, 126–156, 157–163, 164–170, 171–177, 178–188, 189–193, 194–201, 202–206, 207–212, 213–218, 219–224, 225–230, 231–238, 239–245, 246–252, 253–259, 260–276, and 277–285. The segment at 8 to 285 is 31 X approximate tandem repeats; the sequence is TYSQAAAQQG…GVYGQESGGF (278 aa). The interval 121–350 is disordered; sequence QPAYPTYGQQ…EGPDLDLGLP (230 aa). Polar residues-rich tracts occupy residues 127-137 and 146-172; these read YGQQPTATAPT and AETS…NYSY. Residues 192–266 show a composition bias toward low complexity; that stretch reads PTSYSSSQPT…QSSSYGQQSS (75 aa). Residues 256 to 285 enclose the IQ domain; that stretch reads QQSSSYGQQSSFRQDHPSSMGVYGQESGGF. Serine 266 bears the Phosphoserine; by PKC mark. Asymmetric dimethylarginine is present on residues arginine 300, arginine 302, arginine 304, arginine 309, arginine 314, arginine 317, and arginine 321. Positions 308–334 are enriched in gly residues; sequence DRGGMSRGGRGGGRGGLGAGERGGFNK. A compositionally biased stretch (low complexity) spans 335–350; that stretch reads PGGPMDEGPDLDLGLP. An RRM domain is found at 360–446; it reads SAIYVQGLND…SKLKVSLARK (87 aa). Position 438 is an N6-acetyllysine (lysine 438). Disordered regions lie at residues 447–524 and 544–655; these read KPPM…WQCP and APKP…DRPY. Asymmetric dimethylarginine occurs at positions 454 and 463. Arginine 470 is subject to Asymmetric dimethylarginine; alternate. An Omega-N-methylarginine; alternate modification is found at arginine 470. The segment covering 471–489 has biased composition (gly residues); that stretch reads GGPGGPGGPGGPMGRMGGR. Arginine 485 carries the post-translational modification Omega-N-methylarginine. The residue at position 489 (arginine 489) is an Asymmetric dimethylarginine; by PRMT8. 3 positions are modified to asymmetric dimethylarginine: arginine 493, arginine 499, and arginine 502. An Asymmetric dimethylarginine; alternate modification is found at arginine 505. Position 505 is an omega-N-methylarginine; alternate (arginine 505). Residues 517 to 548 form a RanBP2-type zinc finger; sequence RAGDWQCPNPGCGNQNFAWRTECNQCKAPKPE. The segment covering 550 to 559 has biased composition (pro residues); the sequence is FLPPPFPPPG. An asymmetric dimethylarginine mark is found at arginine 562 and arginine 564. The segment covering 565–590 has biased composition (gly residues); the sequence is GGPGGMRGGRGGLMDRGGPGGMFRGG. Arginine 571 is modified (asymmetric dimethylarginine; alternate; by PRMT8). Position 571 is an omega-N-methylarginine; alternate; by PRMT8 (arginine 571). An asymmetric dimethylarginine mark is found at arginine 574, arginine 580, arginine 588, and arginine 591. Over residues 591 to 605 the composition is skewed to basic and acidic residues; the sequence is RGGDRGGFRGGRGMD. Arginine 595 bears the Asymmetric dimethylarginine; alternate; by PRMT8 mark. At arginine 595 the chain carries Omega-N-methylarginine; alternate; by PRMT8. Arginine 599 carries the asymmetric dimethylarginine modification. Arginine 602 carries the asymmetric dimethylarginine; by PRMT8 modification. At arginine 606 the chain carries Asymmetric dimethylarginine; alternate; by PRMT8. Arginine 606 carries the post-translational modification Omega-N-methylarginine; alternate; by PRMT8. Over residues 606–617 the composition is skewed to gly residues; it reads RGGFGGGRRGGP. Arginine 614 bears the Asymmetric dimethylarginine; alternate mark. Arginine 614 carries the omega-N-methylarginine; alternate modification. Residues arginine 632 and arginine 635 each carry the asymmetric dimethylarginine modification. The Nuclear localization signal motif lies at 638–655; it reads PGKMDKGEHRQERRDRPY. Basic and acidic residues predominate over residues 640–655; it reads KMDKGEHRQERRDRPY.

Belongs to the RRM TET family. As to quaternary structure, binds RNA, POLR2C, SF1 and calmodulin. Interacts with PTK2B and TDRD3. Forms a complex with REC8, PRDM9, SYCP3 and SYCP1; complex formation is dependent of phosphorylated form of REC8 and requires PRDM9 bound to hotspot DNA; EWSR1 joins PRDM9 with the chromosomal axis through REC8. Phosphorylated; calmodulin-binding inhibits phosphorylation of Ser-266. Post-translationally, highly methylated on arginine residues. Methylation is mediated by PRMT1 and, at lower level by PRMT8.

The protein resides in the nucleus. It localises to the cytoplasm. Its subcellular location is the cell membrane. Binds to ssRNA containing the consensus sequence 5'-AGGUAA-3'. Might function as a transcriptional repressor. The polypeptide is RNA-binding protein EWS (Ewsr1) (Mus musculus (Mouse)).